Reading from the N-terminus, the 608-residue chain is Probable cytosolic Fe-S cluster assembly factor SPAC806.02c (608 aa).

Residue 13-20 coordinates ATP; the sequence is GKGGVGKS. Residues C201 and C204 each coordinate [4Fe-4S] cluster. WD repeat units follow at residues 288–327, 331–371, 376–415, 421–460, 465–504, 529–567, and 576–608; these read GHTG…LVHV, FHTR…WECT, GHEN…EFDC, EHTQ…WALT, GHTN…EDVA, IHKG…EALW, and AHGV…WSFK.

It in the N-terminal section; belongs to the Mrp/NBP35 ATP-binding proteins family. NUBP2/CFD1 subfamily. In the C-terminal section; belongs to the WD repeat CIA1 family. Heterotetramer of 2 nbp35 and 2 SPAC806.02c chains. It depends on [4Fe-4S] cluster as a cofactor.

It localises to the cytoplasm. The protein resides in the nucleus. In terms of biological role, fusion protein of two essential components of the cytosolic iron-sulfur (Fe/S) protein assembly (CIA) machinery. Required for maturation of extramitochondrial Fe-S proteins. May form a heterotetramer with nubp35, functioning as a Fe-S scaffold complex, mediating the de novo assembly of an Fe-S cluster and its transfer to target apoproteins. This Schizosaccharomyces pombe (strain 972 / ATCC 24843) (Fission yeast) protein is Probable cytosolic Fe-S cluster assembly factor SPAC806.02c.